Here is an 89-residue protein sequence, read N- to C-terminus: Small ribosomal subunit protein uS15 (89 aa).

It belongs to the universal ribosomal protein uS15 family. As to quaternary structure, part of the 30S ribosomal subunit. Forms a bridge to the 50S subunit in the 70S ribosome, contacting the 23S rRNA.

In terms of biological role, one of the primary rRNA binding proteins, it binds directly to 16S rRNA where it helps nucleate assembly of the platform of the 30S subunit by binding and bridging several RNA helices of the 16S rRNA. Its function is as follows. Forms an intersubunit bridge (bridge B4) with the 23S rRNA of the 50S subunit in the ribosome. The chain is Small ribosomal subunit protein uS15 from Roseiflexus sp. (strain RS-1).